We begin with the raw amino-acid sequence, 164 residues long: Phosphatidyl-N-methylethanolamine N-methyltransferase (164 aa).

Residues 1–21 (MGLLAAIGVLLPFPFYWWLWT) constitute an intramembrane region (helical). Topologically, residues 22–30 (NAQSWVNLC) are lumenal. A helical membrane pass occupies residues 31-52 (GRERDPSTVMARVSHVLKAAQL). Over 53-69 (LSLFSVASLSWPPPLYF) the chain is Cytoplasmic. Residues 70 to 90 (WPLMAFGQFLNFRVYQLLGEA) traverse the membrane as a helical segment. 74 to 76 (AFG) is an S-adenosyl-L-methionine binding site. Topologically, residues 91–131 (GTYYGVRFGKNIPWVTEFPFGVIRDPQYVGSIMSLLACLSW) are lumenal. The helical transmembrane segment at 132–151 (VPFQYILLWSLGYVFMMFLE) threads the bilayer. The Cytoplasmic segment spans residues 152–164 (SKEDPNARAKSIS). 154–155 (ED) lines the S-adenosyl-L-methionine pocket.

This sequence belongs to the class VI-like SAM-binding methyltransferase superfamily. PEMT/PEM2 methyltransferase family.

The protein resides in the endoplasmic reticulum membrane. It carries out the reaction a 1,2-diacyl-sn-glycero-3-phospho-N-methylethanolamine + S-adenosyl-L-methionine = a 1,2-diacyl-sn-glycero-3-phospho-N,N-dimethylethanolamine + S-adenosyl-L-homocysteine + H(+). It catalyses the reaction a 1,2-diacyl-sn-glycero-3-phospho-N,N-dimethylethanolamine + S-adenosyl-L-methionine = a 1,2-diacyl-sn-glycero-3-phosphocholine + S-adenosyl-L-homocysteine + H(+). It participates in phospholipid metabolism; phosphatidylcholine biosynthesis. Functionally, catalyzes the second two steps of the methylation pathway of phosphatidylcholine biosynthesis, the SAM-dependent methylation of phosphatidylmonomethylethanolamine (PMME) to phosphatidyldimethylethanolamine (PDME) and of PDME to phosphatidylcholine (PC). In Arabidopsis thaliana (Mouse-ear cress), this protein is Phosphatidyl-N-methylethanolamine N-methyltransferase (PLMT).